The following is a 350-amino-acid chain: Protein RecA (350 aa).

67–74 (GPESSGKT) is an ATP binding site.

It belongs to the RecA family.

It is found in the cytoplasm. Can catalyze the hydrolysis of ATP in the presence of single-stranded DNA, the ATP-dependent uptake of single-stranded DNA by duplex DNA, and the ATP-dependent hybridization of homologous single-stranded DNAs. It interacts with LexA causing its activation and leading to its autocatalytic cleavage. This chain is Protein RecA, found in Chlamydia felis (strain Fe/C-56) (Chlamydophila felis).